The following is a 73-amino-acid chain: uncharacterized protein (73 aa).

This is an uncharacterized protein from Vaccinia virus (strain Copenhagen) (VACV).